The chain runs to 150 residues: SsrA-binding protein (150 aa).

Belongs to the SmpB family.

Its subcellular location is the cytoplasm. Its function is as follows. Required for rescue of stalled ribosomes mediated by trans-translation. Binds to transfer-messenger RNA (tmRNA), required for stable association of tmRNA with ribosomes. tmRNA and SmpB together mimic tRNA shape, replacing the anticodon stem-loop with SmpB. tmRNA is encoded by the ssrA gene; the 2 termini fold to resemble tRNA(Ala) and it encodes a 'tag peptide', a short internal open reading frame. During trans-translation Ala-aminoacylated tmRNA acts like a tRNA, entering the A-site of stalled ribosomes, displacing the stalled mRNA. The ribosome then switches to translate the ORF on the tmRNA; the nascent peptide is terminated with the 'tag peptide' encoded by the tmRNA and targeted for degradation. The ribosome is freed to recommence translation, which seems to be the essential function of trans-translation. The polypeptide is SsrA-binding protein (Campylobacter jejuni (strain RM1221)).